A 337-amino-acid polypeptide reads, in one-letter code: Protein BIG GRAIN 1-like (337 aa).

3 disordered regions span residues 1–32 (MRDM…PSFS), 120–163 (SAAG…RPAS), and 179–235 (KRPS…PSRS). The segment covering 137 to 146 (HEQPDVEKTA) has biased composition (basic and acidic residues). Low complexity-rich tracts occupy residues 150–163 (PGSA…RPAS) and 195–209 (PACS…SSYA).

It belongs to the BIG GRAIN 1 (BG1) plant protein family.

Its subcellular location is the cell membrane. Functionally, involved in auxin transport. Regulator of the auxin signaling pathway. This chain is Protein BIG GRAIN 1-like, found in Oryza sativa subsp. japonica (Rice).